The sequence spans 208 residues: dITP/XTP pyrophosphatase (208 aa).

11-16 (TGNAKK) contributes to the substrate binding site. Asp73 functions as the Proton acceptor in the catalytic mechanism. Asp73 lines the Mg(2+) pocket. Substrate contacts are provided by residues Ser74, 157-160 (FGYD), Lys180, and 185-186 (HR).

Belongs to the HAM1 NTPase family. Homodimer. The cofactor is Mg(2+).

The catalysed reaction is XTP + H2O = XMP + diphosphate + H(+). The enzyme catalyses dITP + H2O = dIMP + diphosphate + H(+). It catalyses the reaction ITP + H2O = IMP + diphosphate + H(+). Functionally, pyrophosphatase that catalyzes the hydrolysis of nucleoside triphosphates to their monophosphate derivatives, with a high preference for the non-canonical purine nucleotides XTP (xanthosine triphosphate), dITP (deoxyinosine triphosphate) and ITP. Seems to function as a house-cleaning enzyme that removes non-canonical purine nucleotides from the nucleotide pool, thus preventing their incorporation into DNA/RNA and avoiding chromosomal lesions. The polypeptide is dITP/XTP pyrophosphatase (Rhodopirellula baltica (strain DSM 10527 / NCIMB 13988 / SH1)).